A 123-amino-acid polypeptide reads, in one-letter code: Small ribosomal subunit protein uS12 (123 aa).

Positions 1 to 21 (MPTIEQLVRKGRQAKPKKSKT) are disordered. Residues 9–20 (RKGRQAKPKKSK) show a composition bias toward basic residues. D89 is subject to 3-methylthioaspartic acid.

This sequence belongs to the universal ribosomal protein uS12 family. Part of the 30S ribosomal subunit. Contacts proteins S8 and S17. May interact with IF1 in the 30S initiation complex.

With S4 and S5 plays an important role in translational accuracy. Functionally, interacts with and stabilizes bases of the 16S rRNA that are involved in tRNA selection in the A site and with the mRNA backbone. Located at the interface of the 30S and 50S subunits, it traverses the body of the 30S subunit contacting proteins on the other side and probably holding the rRNA structure together. The combined cluster of proteins S8, S12 and S17 appears to hold together the shoulder and platform of the 30S subunit. The sequence is that of Small ribosomal subunit protein uS12 from Bifidobacterium longum subsp. infantis (strain ATCC 15697 / DSM 20088 / JCM 1222 / NCTC 11817 / S12).